The following is a 964-amino-acid chain: SKI family transcriptional corepressor 1 (964 aa).

Disordered stretches follow at residues 45-72, 278-365, 414-461, 525-587, 610-768, and 794-842; these read TQLG…SSAL, RTFS…GGSA, AGEP…WGHQ, AGGG…RKSS, REAY…GAAK, and LCTP…EDGL. Positions 283–310 are enriched in gly residues; the sequence is QGGGGGGANSGSGGAGKGGAGGGGGPGC. The span at 345–355 shows a compositional bias: low complexity; the sequence is ALGLAAAASGP. 2 stretches are compositionally biased toward gly residues: residues 356-365 and 417-440; these read AGPGGPGGSA and PKGG…GPGA. A compositionally biased stretch (pro residues) spans 571–583; that stretch reads SLGPLPPPPPPPA. A compositionally biased stretch (acidic residues) spans 652 to 661; it reads DTADEPEVDV. Residues 798–808 show a composition bias toward basic and acidic residues; sequence ETHEPDKEDNH. Positions 823–834 are enriched in polar residues; that stretch reads DQRSVSQPSPAN. A coiled-coil region spans residues 853–921; sequence EKDIENLARE…DTLCNELDQE (69 aa).

It belongs to the SKI family. In terms of assembly, interacts with SMAD1, SMAD2 and SMAD3. Interacts with LBX1. In terms of tissue distribution, expressed in brain with higher levels in embryo than adult. Expressed by migratory precursors of Purkinje cells in the postnatal brain. Also expressed in adult testis.

The protein localises to the nucleus. In terms of biological role, inhibits BMP signaling. Acts as a transcriptional corepressor of LBX1. The protein is SKI family transcriptional corepressor 1 (Skor1) of Mus musculus (Mouse).